Consider the following 329-residue polypeptide: Lipoyl synthase (329 aa).

Positions 72, 77, 83, 98, 102, 105, and 313 each coordinate [4Fe-4S] cluster. Positions 83 to 303 (CWSHGTATIM…QIGLKKGFFE (221 aa)) constitute a Radical SAM core domain.

Belongs to the radical SAM superfamily. Lipoyl synthase family. The cofactor is [4Fe-4S] cluster.

The protein resides in the cytoplasm. It carries out the reaction [[Fe-S] cluster scaffold protein carrying a second [4Fe-4S](2+) cluster] + N(6)-octanoyl-L-lysyl-[protein] + 2 oxidized [2Fe-2S]-[ferredoxin] + 2 S-adenosyl-L-methionine + 4 H(+) = [[Fe-S] cluster scaffold protein] + N(6)-[(R)-dihydrolipoyl]-L-lysyl-[protein] + 4 Fe(3+) + 2 hydrogen sulfide + 2 5'-deoxyadenosine + 2 L-methionine + 2 reduced [2Fe-2S]-[ferredoxin]. Its pathway is protein modification; protein lipoylation via endogenous pathway; protein N(6)-(lipoyl)lysine from octanoyl-[acyl-carrier-protein]: step 2/2. Its function is as follows. Catalyzes the radical-mediated insertion of two sulfur atoms into the C-6 and C-8 positions of the octanoyl moiety bound to the lipoyl domains of lipoate-dependent enzymes, thereby converting the octanoylated domains into lipoylated derivatives. This chain is Lipoyl synthase, found in Legionella pneumophila (strain Paris).